The primary structure comprises 83 residues: Sulfur carrier protein TusA (83 aa).

The active-site Cysteine persulfide intermediate is Cys19.

Belongs to the sulfur carrier protein TusA family.

Its subcellular location is the cytoplasm. Sulfur carrier protein which probably makes part of a sulfur-relay system. This Vibrio atlanticus (strain LGP32) (Vibrio splendidus (strain Mel32)) protein is Sulfur carrier protein TusA.